The primary structure comprises 357 residues: Phenylalanine--tRNA ligase alpha subunit (357 aa).

Glutamate 257 contributes to the Mg(2+) binding site.

The protein belongs to the class-II aminoacyl-tRNA synthetase family. Phe-tRNA synthetase alpha subunit type 1 subfamily. As to quaternary structure, tetramer of two alpha and two beta subunits. Mg(2+) serves as cofactor.

The protein resides in the cytoplasm. The catalysed reaction is tRNA(Phe) + L-phenylalanine + ATP = L-phenylalanyl-tRNA(Phe) + AMP + diphosphate + H(+). The polypeptide is Phenylalanine--tRNA ligase alpha subunit (Roseobacter denitrificans (strain ATCC 33942 / OCh 114) (Erythrobacter sp. (strain OCh 114))).